A 725-amino-acid polypeptide reads, in one-letter code: Exocyst complex component 8 (725 aa).

The residue at position 19 (Ser-19) is a Phosphoserine. Residues 116–159 (AASGGEEGGGGAGGRDQLRGQTGFFPSPGGASRDGSGPGEEGKQ) are disordered. A compositionally biased stretch (gly residues) spans 120-129 (GEEGGGGAGG). A PH domain is found at 182-282 (YLVYNGDLVE…WLEVLEETKR (101 aa)). Positions 285-322 (SEKRRREQEEAAAPRGPPQVTPKASNPFEDEDDDEPTV) are disordered. The segment covering 312-322 (FEDEDDDEPTV) has biased composition (acidic residues).

It belongs to the EXO84 family. The exocyst complex is composed of EXOC1, EXOC2, EXOC3, EXOC4, EXOC5, EXOC6, EXOC7 and EXOC8. Interacts (via PH domain) with GTP-bound RALA and RALB. Interacts with SH3BP1; required for the localization of both SH3BP1 and the exocyst to the leading edge of migrating cells.

It localises to the cytoplasm. The protein resides in the perinuclear region. Its subcellular location is the cell projection. It is found in the growth cone. In terms of biological role, component of the exocyst complex involved in the docking of exocytic vesicles with fusion sites on the plasma membrane. The polypeptide is Exocyst complex component 8 (EXOC8) (Bos taurus (Bovine)).